The primary structure comprises 161 residues: MKLNELRDNEGAARKKKRVARGPGSGKGKTAGRGIKGQKSRSGVALNGYEGGQMPLYRRLPKRGFTKPNRKEYAVVNLGLIQKFVDAGKLDASQPIDENAIVAAGVTSHKRDGIRVLAKGEITAKLALTVSGASKSAVEAIEKAGGSITLTAPAAAAASAE.

Residues methionine 1 to alanine 13 are compositionally biased toward basic and acidic residues. The segment at methionine 1–glycine 51 is disordered. The span at proline 23 to isoleucine 35 shows a compositional bias: gly residues.

It belongs to the universal ribosomal protein uL15 family. In terms of assembly, part of the 50S ribosomal subunit.

Its function is as follows. Binds to the 23S rRNA. The sequence is that of Large ribosomal subunit protein uL15 from Cereibacter sphaeroides (strain ATCC 17023 / DSM 158 / JCM 6121 / CCUG 31486 / LMG 2827 / NBRC 12203 / NCIMB 8253 / ATH 2.4.1.) (Rhodobacter sphaeroides).